The following is a 40-amino-acid chain: 67 kDa serum albumin (40 aa).

The Albumin domain maps to 1-40; the sequence is DAEHKSEIVHRFNDLKEEKFKGAALITFAQFLHKKPEEEA. A Cu cation-binding site is contributed by His4.

The protein belongs to the ALB/AFP/VDB family. Plasma.

The protein localises to the secreted. Its function is as follows. Serum albumin, the main protein of plasma, has a good binding capacity for water, Ca(2+), Na(+), K(+), fatty acids, hormones, bilirubin and drugs. Its main function is the regulation of the colloidal osmotic pressure of blood. The sequence is that of 67 kDa serum albumin from Trachemys scripta (Red-eared slider turtle).